Consider the following 575-residue polypeptide: Golgi-associated kinase 1A (575 aa).

The first 29 residues, M1–A29, serve as a signal peptide directing secretion. Positions V30–R119 are cleaved as a propeptide — removed in mature form. The interval T53–T58 is O-glycosylated at one site. The span at V143–H153 shows a compositional bias: basic and acidic residues. The tract at residues V143–E162 is disordered. Positions R437–P575 are cleaved as a propeptide — removed in mature form. N566 carries N-linked (GlcNAc...) asparagine glycosylation.

Belongs to the GASK family. Post-translationally, O-glycosylated with core 1 or possibly core 8 glycans. Proteolytically cleaved. Cleaved at Arg-120 and Arg-437 leading to a processed mature product of 35 kDa. The cleavage takes place in the Golgi apparatus. Expressed in skin, lung and colon (at protein level).

Its subcellular location is the secreted. The protein resides in the endoplasmic reticulum. It is found in the golgi apparatus. It localises to the membrane. The protein localises to the caveola. The protein is Golgi-associated kinase 1A of Homo sapiens (Human).